The chain runs to 415 residues: Putative competence-damage inducible protein (415 aa).

This sequence belongs to the CinA family.

The chain is Putative competence-damage inducible protein from Listeria innocua serovar 6a (strain ATCC BAA-680 / CLIP 11262).